Consider the following 842-residue polypeptide: ATP-binding cassette sub-family B member 6 (842 aa).

Topologically, residues 1-26 (MVTVGNYCEAEGPLGPAWAQNGLSPC) are lumenal. The interval 1 to 205 (MVTVGNYCEA…SGGLFILGLW (205 aa)) is required for the lysosomal targeting. The interval 1–236 (MVTVGNYCEA…RNQAQSTDRT (236 aa)) is required for ATPase activity. An intrachain disulfide couples cysteine 8 to cysteine 26. A helical membrane pass occupies residues 27–47 (FFFTLVPSTLMALGALALVLV). Topologically, residues 48 to 72 (LPCRRRDVPSGTEELFWAADSRVAP) are cytoplasmic. A helical transmembrane segment spans residues 73–93 (YALQLFLATLQVALPLAGLAG). Over 94 to 106 (RVGTARGVRLPGY) the chain is Lumenal. A helical transmembrane segment spans residues 107-127 (LLLASMLGSLASACGLWLLVA). The Cytoplasmic portion of the chain corresponds to 128-147 (ERRQARQSLAMGVWMKFRHS). A helical transmembrane segment spans residues 148 to 168 (SGLLLLWTVAFAAENLALVSW). Topologically, residues 169 to 185 (NSPQWWWARADLGQQVQ) are lumenal. A helical transmembrane segment spans residues 186–206 (FGLWVLRYVISGGLFILGLWA). Residues 207–263 (PGLRPQSYTLRVHEADQDVERNQAQSTDRTSTWRDLGRKLRLLSSYLWPRGSPALQF) are Cytoplasmic-facing. A helical membrane pass occupies residues 264–284 (IVLICLGLMGLDRALNVLVPI). The 292-residue stretch at 265-556 (VLICLGLMGL…FGTYYRMIQT (292 aa)) folds into the ABC transmembrane type-1 domain. The Lumenal portion of the chain corresponds to 285-305 (FYRDIVNLLTSKAPWSSLAWT). Residues 306-326 (VTTYVFLKFLQGGGTGSTGFV) form a helical membrane-spanning segment. Over 327–375 (SNLRTFLWIRVQQFTSRGVELRLFSHLHELSLRWHLGRRTGEVLRVVDR) the chain is Cytoplasmic. A helical transmembrane segment spans residues 376 to 396 (GTSSVTGLLSYLVFNIIPTLA). Aspartate 397 is a topological domain (lumenal). A helical membrane pass occupies residues 398–418 (IIIGIIYFSMFFNAWFGLIVF). At 419 to 499 (LCMSLYLFLT…SSASLVVLNQ (81 aa)) the chain is on the cytoplasmic side. Residues 500 to 520 (TQNLVIGLGLLAGSLLCAYFV) traverse the membrane as a helical segment. The Lumenal segment spans residues 521 to 529 (SEQKLQVGD). The chain crosses the membrane as a helical span at residues 530 to 550 (FVLFGTYITQLYMPLNWFGTY). The Cytoplasmic segment spans residues 551 to 842 (YRMIQTNFID…SEDSKPQDIA (292 aa)). Positions 590-824 (IEFENVHFSY…GGVYAEMWQL (235 aa)) constitute an ABC transporter domain. 623-630 (GPSGAGKS) lines the ATP pocket.

The protein belongs to the ABC transporter superfamily. ABCB family. Heavy Metal importer (TC 3.A.1.210) subfamily. As to quaternary structure, homodimer. N-glycosylated. As to expression, highly expressed in the liver, adrenal glands, and testis.

The protein resides in the cell membrane. The protein localises to the mitochondrion outer membrane. It is found in the endoplasmic reticulum membrane. Its subcellular location is the golgi apparatus membrane. It localises to the endosome membrane. The protein resides in the lysosome membrane. The protein localises to the late endosome membrane. It is found in the early endosome membrane. Its subcellular location is the secreted. It localises to the extracellular exosome. The protein resides in the mitochondrion. The protein localises to the endosome. It is found in the multivesicular body membrane. Its subcellular location is the melanosome membrane. It carries out the reaction heme b(in) + ATP + H2O = heme b(out) + ADP + phosphate + H(+). It catalyses the reaction coproporphyrin III(in) + ATP + H2O = coproporphyrin III(out) + ADP + phosphate + H(+). The enzyme catalyses pheophorbide a(in) + ATP + H2O = pheophorbide a(out) + ADP + phosphate + H(+). The catalysed reaction is coproporphyrinogen III(in) + ATP + H2O = coproporphyrinogen III(out) + ADP + phosphate + H(+). It carries out the reaction protoporphyrin IX(in) + ATP + H2O = protoporphyrin IX(out) + ADP + phosphate + H(+). It catalyses the reaction coproporphyrin I(in) + ATP + H2O = coproporphyrin I(out) + ADP + phosphate + H(+). The enzyme catalyses uroporphyrin I(in) + ATP + H2O = uroporphyrin I(out) + ADP + phosphate + H(+). The catalysed reaction is uroporphyrin III(in) + ATP + H2O = uroporphyrin III(out) + ADP + phosphate + H(+). ATP-dependent transporter that catalyzes the transport of a broad-spectrum of porphyrins from the cytoplasm to the extracellular space through the plasma membrane or into the vesicle lumen. May also function as an ATP-dependent importer of porphyrins from the cytoplasm into the mitochondria, in turn may participate in the de novo heme biosynthesis regulation and in the coordination of heme and iron homeostasis during phenylhydrazine stress. May also play a key role in the early steps of melanogenesis producing PMEL amyloid fibrils. In vitro, it confers to cells a resistance to toxic metal such as arsenic and cadmium and against chemotherapeutics agent such as 5-fluorouracil, SN-38 and vincristin. In addition may play a role in the transition metal homeostasis. This chain is ATP-binding cassette sub-family B member 6, found in Mesocricetus auratus (Golden hamster).